The primary structure comprises 156 residues: Cytochrome c-type biogenesis protein CcmE 1 (156 aa).

Topologically, residues 1–8 are cytoplasmic; it reads MNATRKQR. The helical; Signal-anchor for type II membrane protein transmembrane segment at 9-29 threads the bilayer; the sequence is LWLVIGVLAAAALAVTLIVFA. Residues 30–156 are Periplasmic-facing; that stretch reads LQRNMSYLFT…ATVAPLTAPR (127 aa). The heme site is built by histidine 123 and tyrosine 127.

It belongs to the CcmE/CycJ family.

It localises to the cell inner membrane. Functionally, heme chaperone required for the biogenesis of c-type cytochromes. Transiently binds heme delivered by CcmC and transfers the heme to apo-cytochromes in a process facilitated by CcmF and CcmH. The polypeptide is Cytochrome c-type biogenesis protein CcmE 1 (Xanthomonas axonopodis pv. citri (strain 306)).